Here is a 138-residue protein sequence, read N- to C-terminus: Ribosomal RNA large subunit methyltransferase H (138 aa).

S-adenosyl-L-methionine is bound by residues leucine 57, glycine 86, and 105 to 110 (LSPLTF).

It belongs to the RNA methyltransferase RlmH family. Homodimer.

Its subcellular location is the cytoplasm. It carries out the reaction pseudouridine(1915) in 23S rRNA + S-adenosyl-L-methionine = N(3)-methylpseudouridine(1915) in 23S rRNA + S-adenosyl-L-homocysteine + H(+). Functionally, specifically methylates the pseudouridine at position 1915 (m3Psi1915) in 23S rRNA. This is Ribosomal RNA large subunit methyltransferase H from Prochlorococcus marinus (strain MIT 9312).